The chain runs to 958 residues: Transcription factor PfmaH (958 aa).

A DNA-binding region (zn(2)-C6 fungal-type) is located at residues 44–70 (CLNCSQAKTGCNKEVPCQRCQDKGLHC). Residues 272 to 301 (EFAGSPSGVSPFGDLSTSNSEPSSSSWGSS) form a disordered region. Residues 287-301 (STSNSEPSSSSWGSS) show a composition bias toward low complexity.

It is found in the nucleus. Its function is as follows. Transcription factor; part of the gene cluster that mediates the biosynthesis of dihydroxynaphthalene (DHN)-melanin, a bluish-green pigment forming a dark layer in the conidial wall that protects the conidia from UV radiations. The 2 transcription factors present in the cluster, PfmaF and PfmaH, coordinately regulate DHN-melanin production. PfmaH acts as a pathway specific regulator to mediate the expression of Pfma cluster genes including PfmaJ, leading to DHN-melanin production in conidia, and regulates the conidial formation. The sequence is that of Transcription factor PfmaH (PfmaH) from Pestalotiopsis fici (strain W106-1 / CGMCC3.15140).